We begin with the raw amino-acid sequence, 367 residues long: MTHRTKTRPVKVGNLTIGGNNELIIQSMTTTKTHDVEATVAEIKRLEEAGCQVVRVAVPDERAANAIADIKKQINIPLVADIHFDYRLALKAIEGGIDKVRINPGNIGRRHKVEAVVNAAKERGIPIRIGVNAGSLERHILEKYGYPTADGMVESALHHIKILEDLDFHDIIVSMKASDVNLAIEAYEKAARAFDYPLHLGITESGTLFAGTVKSAAGLGAILSKGIGNTLRISLSADPVEEVKVARELLKSFGLASNAATLISCPTCGRIEIDLISIANEVEEYISTLQVPIKVAVLGCAVNGPGEAREADIGIAGARGEGLLFRKGQVVRKVPEEIMVEELKKEIDVIAAEMAAEREKEKETQEQ.

Residues Cys265, Cys268, Cys300, and Glu307 each contribute to the [4Fe-4S] cluster site.

Belongs to the IspG family. Requires [4Fe-4S] cluster as cofactor.

It carries out the reaction (2E)-4-hydroxy-3-methylbut-2-enyl diphosphate + oxidized [flavodoxin] + H2O + 2 H(+) = 2-C-methyl-D-erythritol 2,4-cyclic diphosphate + reduced [flavodoxin]. It functions in the pathway isoprenoid biosynthesis; isopentenyl diphosphate biosynthesis via DXP pathway; isopentenyl diphosphate from 1-deoxy-D-xylulose 5-phosphate: step 5/6. Converts 2C-methyl-D-erythritol 2,4-cyclodiphosphate (ME-2,4cPP) into 1-hydroxy-2-methyl-2-(E)-butenyl 4-diphosphate. This Bacillus cereus (strain ATCC 10987 / NRS 248) protein is 4-hydroxy-3-methylbut-2-en-1-yl diphosphate synthase (flavodoxin).